The following is a 430-amino-acid chain: Tektin-2 (430 aa).

Coiled coils occupy residues 80–162 and 225–382; these read KCLT…FEQL and NKDR…CKAN.

Belongs to the tektin family. In terms of assembly, microtubule inner protein component of sperm flagellar doublet microtubules. May interact with CCDC172. Post-translationally, tyrosine phosphorylated. Ubiquitinated, leading to its degradation. Deubiquitinated by USP16, promoting its stability. As to expression, expressed at high levels in testis, trachea and fetal lung, and at lower levels in ovary, pituitary, adult lung, fetal brain and fetal kidney.

Its subcellular location is the cytoplasm. The protein resides in the cytoskeleton. It localises to the cilium axoneme. The protein localises to the flagellum axoneme. It is found in the microtubule organizing center. Functionally, microtubule inner protein (MIP) part of the dynein-decorated doublet microtubules (DMTs) in cilia and flagellar axoneme. Plays a key role in the assembly or attachment of the inner dynein arm to microtubules in sperm flagella and tracheal cilia. Forms filamentous polymers in the walls of ciliary and flagellar microtubules. In Homo sapiens (Human), this protein is Tektin-2.